Here is a 183-residue protein sequence, read N- to C-terminus: Protein Dr1 (183 aa).

In terms of domain architecture, Histone-fold spans 19–82; that stretch reads TLPRASINKI…INAEHVLEAL (64 aa). Positions 92-183 are repression of TATA-containing promoters; that stretch reads QEAEAVLHDC…DDDDDDDDDY (92 aa). Residues 155-183 are disordered; sequence AMVQRPPLADGSVASKPSEDDDDDDDDDY. Positions 173–183 are enriched in acidic residues; it reads EDDDDDDDDDY.

This sequence belongs to the NC2 beta/DR1 family. In terms of assembly, component of the Ada2a-containing (ATAC) complex composed of at least Ada2a, Atac1, Hcf, Ada3, Gcn5, Mocs2B, Charac-14, Atac3, Atac2, NC2beta and wds. Homodimer. Interacts with NC2-alpha/Drap1 to form the dNC2 complex.

It localises to the nucleus. Functionally, bifunctional basic transcription factor. Activates transcription of DPE (Downstream Promoter Element) containing promoters while repressing transcription of promoters which contain TATA elements. Together with Chrac-14, promotes nucleosome sliding of ATP-dependent nucleosome remodeling complexes. The polypeptide is Protein Dr1 (NC2beta) (Drosophila melanogaster (Fruit fly)).